We begin with the raw amino-acid sequence, 444 residues long: E3 ubiquitin-protein ligase RNFT2 (444 aa).

Residues 1–181 (MWLFTVNQVL…ILLAKLCFQH (181 aa)) are Extracellular-facing. Disordered stretches follow at residues 13 to 41 (MQRR…ASVD) and 92 to 149 (PASR…PGTP). The span at 107–121 (YHHRQPHHHFHHGGH) shows a compositional bias: basic residues. A compositionally biased stretch (basic and acidic residues) spans 131–140 (GGDHRGHSEE). Residues 182–202 (KLGIAVCIGMASTFAYANSTL) form a helical membrane-spanning segment. Residues 203–214 (REQVSLKEKRSV) are Cytoplasmic-facing. Residues 215-235 (LVILWILAFLAGNTLYVLYTF) traverse the membrane as a helical segment. Residues 236–255 (SSQQLYNSLIFLKPNLEMLD) lie on the Extracellular side of the membrane. The chain crosses the membrane as a helical span at residues 256-276 (FFDLLWIVGIADFVLKYITIA). At 277–329 (LKCLIVALPKIILAVKSKGKFYLVIEELSQLFRSLVPIQLWYKYIMGDDSSNS) the chain is on the cytoplasmic side. The helical transmembrane segment at 330–350 (YFLGGVLIVLYSLCKSFDICG) threads the bilayer. Topologically, residues 351-444 (RVGGVRKALK…GATSAHFQVY (94 aa)) are extracellular. The RING-type zinc-finger motif lies at 384 to 422 (CAICQAEFREPLILLCQHVFCEECLCLWLDRERTCPLCR).

The protein localises to the membrane. Functionally, E3 ubiquitin-protein ligase that negatively regulates IL3-dependent cellular responses through IL3RA ubiquitination and degradation by the proteasome, having an anti-inflammatory effect. The protein is E3 ubiquitin-protein ligase RNFT2 of Homo sapiens (Human).